Reading from the N-terminus, the 841-residue chain is Microcephalin (841 aa).

The region spanning 1-93 is the BRCT 1 domain; sequence MAAPILKDVV…AHIDESLFPA (93 aa). Phosphoserine occurs at positions 278, 286, 295, and 332. At T334 the chain carries Phosphothreonine. 4 disordered regions span residues 340 to 375, 417 to 445, 481 to 507, and 562 to 593; these read GHLL…RKRS, PDNL…SCRS, SSPQ…SAPE, and VGLK…PRSV. The span at 342-358 shows a compositional bias: basic residues; the sequence is LLIHSRPRSSSVKRKRV. The span at 433–445 shows a compositional bias: polar residues; sequence QLPSSPAQFSCRS. A compositionally biased stretch (polar residues) spans 565-583; it reads KSTQDKGTTSKISNSSEGE. BRCT domains lie at 646–736 and 757–839; these read SGKG…SFEL and YRGT…NYLL.

In terms of assembly, interacts with CDC27 and maybe other components of the APC/C complex. Interacts with histone variant H2AX under DNA damage conditions.

It localises to the cytoplasm. The protein resides in the cytoskeleton. The protein localises to the microtubule organizing center. Its subcellular location is the centrosome. Implicated in chromosome condensation and DNA damage induced cellular responses. May play a role in neurogenesis and regulation of the size of the cerebral cortex. This Colobus guereza (Mantled guereza) protein is Microcephalin.